The chain runs to 436 residues: GTPase Der (436 aa).

2 EngA-type G domains span residues 4 to 167 (PTVA…PVEE) and 175 to 351 (IRFS…ESQN). GTP contacts are provided by residues 10–17 (GRPNVGKS), 57–61 (DTGGI), 119–122 (NKVD), 181–188 (GRPNVGKS), 229–233 (DTAGM), and 294–297 (NKWD). Residues 352 to 436 (KRIPSAVLND…PINLIARKRK (85 aa)) form the KH-like domain.

Belongs to the TRAFAC class TrmE-Era-EngA-EngB-Septin-like GTPase superfamily. EngA (Der) GTPase family. Associates with the 50S ribosomal subunit.

GTPase that plays an essential role in the late steps of ribosome biogenesis. The protein is GTPase Der of Streptococcus agalactiae serotype III (strain NEM316).